Reading from the N-terminus, the 227-residue chain is Octanoyltransferase (227 aa).

The BPL/LPL catalytic domain occupies Arg-34–Trp-212. Substrate is bound by residues Arg-76–His-83, Ala-143–Ala-145, and Gly-156–Ala-158. Cys-174 serves as the catalytic Acyl-thioester intermediate.

It belongs to the LipB family.

It localises to the cytoplasm. It catalyses the reaction octanoyl-[ACP] + L-lysyl-[protein] = N(6)-octanoyl-L-lysyl-[protein] + holo-[ACP] + H(+). It participates in protein modification; protein lipoylation via endogenous pathway; protein N(6)-(lipoyl)lysine from octanoyl-[acyl-carrier-protein]: step 1/2. Catalyzes the transfer of endogenously produced octanoic acid from octanoyl-acyl-carrier-protein onto the lipoyl domains of lipoate-dependent enzymes. Lipoyl-ACP can also act as a substrate although octanoyl-ACP is likely to be the physiological substrate. This Synechocystis sp. (strain ATCC 27184 / PCC 6803 / Kazusa) protein is Octanoyltransferase.